A 147-amino-acid chain; its full sequence is MLMPKRVKRRRVHRGRMTGQATKGNKVTYGEYGLMALEPAWITSNQIEAARIAMTRSIKRGGKVWIKIFPHKPVTKKPAETRMGAGKGSPEFWVAVVKPGRIMFELAGVPEDKAREALRLAMHKLPIKTKFVTRQEQEVKGGEADEN.

Positions 1 to 16 are enriched in basic residues; that stretch reads MLMPKRVKRRRVHRGR. Residues 1–20 are disordered; the sequence is MLMPKRVKRRRVHRGRMTGQ.

It belongs to the universal ribosomal protein uL16 family. Part of the 50S ribosomal subunit.

In terms of biological role, binds 23S rRNA and is also seen to make contacts with the A and possibly P site tRNAs. In Alkaliphilus metalliredigens (strain QYMF), this protein is Large ribosomal subunit protein uL16.